The chain runs to 171 residues: ATP synthase subunit b (171 aa).

Residues 19-39 (VGVGLILFIAIVIWAKAPAMI) form a helical membrane-spanning segment.

This sequence belongs to the ATPase B chain family. F-type ATPases have 2 components, F(1) - the catalytic core - and F(0) - the membrane proton channel. F(1) has five subunits: alpha(3), beta(3), gamma(1), delta(1), epsilon(1). F(0) has three main subunits: a(1), b(2) and c(10-14). The alpha and beta chains form an alternating ring which encloses part of the gamma chain. F(1) is attached to F(0) by a central stalk formed by the gamma and epsilon chains, while a peripheral stalk is formed by the delta and b chains.

The protein localises to the cell inner membrane. Its function is as follows. F(1)F(0) ATP synthase produces ATP from ADP in the presence of a proton or sodium gradient. F-type ATPases consist of two structural domains, F(1) containing the extramembraneous catalytic core and F(0) containing the membrane proton channel, linked together by a central stalk and a peripheral stalk. During catalysis, ATP synthesis in the catalytic domain of F(1) is coupled via a rotary mechanism of the central stalk subunits to proton translocation. Component of the F(0) channel, it forms part of the peripheral stalk, linking F(1) to F(0). The polypeptide is ATP synthase subunit b (Caulobacter sp. (strain K31)).